A 290-amino-acid polypeptide reads, in one-letter code: 2-phosphoglycerate kinase (290 aa).

An ATP-cone domain is found at 1 to 89; sequence MIIVTDSERK…FWRELRRRKV (89 aa).

It belongs to the 2-phosphoglycerate kinase family. Requires a divalent metal cation as cofactor.

It carries out the reaction (2R)-2-phosphoglycerate + ATP = (2R)-2,3-bisphosphoglycerate + ADP + H(+). The protein operates within thermoadapter biosynthesis; cyclic 2,3-diphosphoglycerate biosynthesis; cyclic 2,3-diphosphoglycerate from 2-phospho-D-glycerate: step 1/2. Its function is as follows. Catalyzes the phosphorylation of 2-phosphoglycerate to 2,3-diphosphoglycerate. Involved in the biosynthesis of cyclic 2,3-bisphosphoglycerate, a thermoprotectant. The sequence is that of 2-phosphoglycerate kinase from Thermococcus kodakarensis (strain ATCC BAA-918 / JCM 12380 / KOD1) (Pyrococcus kodakaraensis (strain KOD1)).